The primary structure comprises 395 residues: Non-homologous end joining protein Ku (395 aa).

Residues 9-181 (ISFGLVSIPI…PPEDAAPDGD (173 aa)) enclose the Ku domain. Positions 252–395 (RAARTSRDDE…SASSRKRTSA (144 aa)) are disordered. Composition is skewed to polar residues over residues 283-292 (SSKTSGQSSG) and 311-320 (GKTVTRSGDS). The segment covering 351–361 (TARKTTAKKTT) has biased composition (basic residues). The segment covering 362–371 (AKGTTGTTAA) has biased composition (low complexity).

This sequence belongs to the prokaryotic Ku family. As to quaternary structure, homodimer. Interacts with LigD.

Functionally, with LigD forms a non-homologous end joining (NHEJ) DNA repair enzyme, which repairs dsDNA breaks with reduced fidelity. Binds linear dsDNA with 5'- and 3'- overhangs but not closed circular dsDNA nor ssDNA. Recruits and stimulates the ligase activity of LigD. This is Non-homologous end joining protein Ku from Streptomyces griseus subsp. griseus (strain JCM 4626 / CBS 651.72 / NBRC 13350 / KCC S-0626 / ISP 5235).